We begin with the raw amino-acid sequence, 825 residues long: Phenylalanine--tRNA ligase beta subunit (825 aa).

The region spanning 39-154 is the tRNA-binding domain; the sequence is RTWADGVVLG…EAHPLGSDVR (116 aa). Positions 411 to 506 constitute a B5 domain; it reads PLERTLKLRL…RLYGYDRFSE (96 aa). Positions 484, 490, 493, and 494 each coordinate Mg(2+). The region spanning 731-824 is the FDX-ACB domain; the sequence is SPFPAADRDI…LATQFPVTLR (94 aa).

The protein belongs to the phenylalanyl-tRNA synthetase beta subunit family. Type 1 subfamily. Tetramer of two alpha and two beta subunits. Mg(2+) is required as a cofactor.

Its subcellular location is the cytoplasm. The enzyme catalyses tRNA(Phe) + L-phenylalanine + ATP = L-phenylalanyl-tRNA(Phe) + AMP + diphosphate + H(+). In Synechococcus sp. (strain JA-2-3B'a(2-13)) (Cyanobacteria bacterium Yellowstone B-Prime), this protein is Phenylalanine--tRNA ligase beta subunit.